Consider the following 256-residue polypeptide: MDKPLVIAGRSFQSRLLLGTGKFSSSEAMKRAIEASGSEVVTVALRRVELENPQDSILSAIDTSRYLLLPNTSGARDALEAVRLARLARAAGCEPWVKLEVTPDPHYLLPDPVETLKAAEILIKEGFIVLPYINADPILAKRLEDLGAATVMPLGSPIGSNRGIRTRDSIAIIIEKANVPVVVDAGLGAPSHAAEAMEMGADAVLVNTAIAVAGDPEAMAKAFRKGVEAGREAYLAGLGSTRATAEASSPLTGFLR.

Lysine 98 acts as the Schiff-base intermediate with DXP in catalysis. 1-deoxy-D-xylulose 5-phosphate is bound by residues glycine 159, 185–186, and 207–208; these read AG and NT.

Belongs to the ThiG family. Homotetramer. Forms heterodimers with either ThiH or ThiS.

The protein resides in the cytoplasm. The enzyme catalyses [ThiS sulfur-carrier protein]-C-terminal-Gly-aminoethanethioate + 2-iminoacetate + 1-deoxy-D-xylulose 5-phosphate = [ThiS sulfur-carrier protein]-C-terminal Gly-Gly + 2-[(2R,5Z)-2-carboxy-4-methylthiazol-5(2H)-ylidene]ethyl phosphate + 2 H2O + H(+). It functions in the pathway cofactor biosynthesis; thiamine diphosphate biosynthesis. In terms of biological role, catalyzes the rearrangement of 1-deoxy-D-xylulose 5-phosphate (DXP) to produce the thiazole phosphate moiety of thiamine. Sulfur is provided by the thiocarboxylate moiety of the carrier protein ThiS. In vitro, sulfur can be provided by H(2)S. This is Thiazole synthase from Syntrophobacter fumaroxidans (strain DSM 10017 / MPOB).